The chain runs to 154 residues: Superoxide dismutase [Cu-Zn] (154 aa).

Positions 47, 49, and 64 each coordinate Cu cation. Residues C58 and C147 are joined by a disulfide bond. Zn(2+) contacts are provided by H64, H72, H81, and D84. Cu cation is bound at residue H121. Over residues 125-136 the composition is skewed to basic and acidic residues; sequence DDLGKGGNEESL. The interval 125–144 is disordered; that stretch reads DDLGKGGNEESLKTGNAGPR. Position 144 (R144) interacts with substrate.

The protein belongs to the Cu-Zn superoxide dismutase family. Homodimer. Cu cation serves as cofactor. Requires Zn(2+) as cofactor.

The protein localises to the cytoplasm. It catalyses the reaction 2 superoxide + 2 H(+) = H2O2 + O2. Its function is as follows. Destroys radicals which are normally produced within the cells and which are toxic to biological systems. This chain is Superoxide dismutase [Cu-Zn] (SOD1), found in Candida glabrata (strain ATCC 2001 / BCRC 20586 / JCM 3761 / NBRC 0622 / NRRL Y-65 / CBS 138) (Yeast).